The sequence spans 120 residues: uncharacterized protein (120 aa).

This is an uncharacterized protein from Allochromatium vinosum (strain ATCC 17899 / DSM 180 / NBRC 103801 / NCIMB 10441 / D) (Chromatium vinosum).